Here is a 185-residue protein sequence, read N- to C-terminus: Iodate reductase subunit IdrB (185 aa).

Residues 1 to 46 constitute a signal peptide (tat-type signal); it reads MTTHPIHLHHDDPAHGGERACMSRRSFLLAGGAMVTLASLPGTAVA. The Rieske domain occupies 69–168; it reads GEPLEFAYPY…LEVRGDDIYA (100 aa). Positions 109, 111, 130, and 133 each coordinate [2Fe-2S] cluster.

This sequence belongs to the AOX family. The iodate reductase (Idr) complex is composed of a molybdopterin-dependent iodate reductase (IdrA and IdrB subunits) and two associated peroxidases (IdrP1 and IdrP2). It depends on [2Fe-2S] cluster as a cofactor. Post-translationally, predicted to be exported by the Tat system. The position of the signal peptide cleavage has not been experimentally proven.

It is found in the periplasm. Its function is as follows. Involved in iodate respiration. May accept electrons from cytochrome c551, and catalyze the reduction of iodate (IO(3)(-)) to produce the chemically unstable intermediate hypoiodous acid (HIO). This intermediate then undergoes abiotic disproportionation to yield two molecules of iodide (I(-)) and one molecule of iodate. The resultant iodate subsequently cycles back into the reductive pathway. The initial reduction of iodate may inadvertently produce low levels of incidental toxic H(2)O(2), which is detoxified by IdrP1 and IdrP2. This Denitromonas iodatirespirans protein is Iodate reductase subunit IdrB.